We begin with the raw amino-acid sequence, 210 residues long: MSVGILGTKLGMTQIFDEAGVAIPVTVIQAGPCTVTQVKTKQTDGYFAIQVGFGEVKPKALNRPLLGHLAKSSAPALRHLNEYHTDSSSDYALGQQIKADIFSEGQIVDVVGTSIGRGFAGNQKRNNFGRGPMSHGSKNHRAPGSIGAGTTPGRVYPGKRMAGRLGGKRITIRKLTIVRVDAERNLLLIKGAIPGKPGALVSVVPAKVVG.

Residues 122-155 (NQKRNNFGRGPMSHGSKNHRAPGSIGAGTTPGRV) are disordered.

This sequence belongs to the universal ribosomal protein uL3 family. As to quaternary structure, part of the 50S ribosomal subunit. Forms a cluster with proteins L14 and L19.

In terms of biological role, one of the primary rRNA binding proteins, it binds directly near the 3'-end of the 23S rRNA, where it nucleates assembly of the 50S subunit. The sequence is that of Large ribosomal subunit protein uL3 from Nostoc punctiforme (strain ATCC 29133 / PCC 73102).